A 560-amino-acid polypeptide reads, in one-letter code: Serine/threonine-protein kinase TOS3 (560 aa).

The 295-residue stretch at 50–344 (FEILATLGNG…LADIKVHPFM (295 aa)) folds into the Protein kinase domain. ATP-binding positions include 56–64 (LGNGQYGKV) and Lys-79. Residue Asp-189 is the Proton acceptor of the active site.

Belongs to the protein kinase superfamily. Ser/Thr protein kinase family. In terms of processing, autophosphorylated.

The catalysed reaction is L-seryl-[protein] + ATP = O-phospho-L-seryl-[protein] + ADP + H(+). It carries out the reaction L-threonyl-[protein] + ATP = O-phospho-L-threonyl-[protein] + ADP + H(+). One of the three SNF1 protein kinases (with SAK1 and ELM1) which are required for growth on nonfermentable carbon sources and nonpreferred sugars and for response to environmental stress. Activates SNF1 by phosphorylation of its activation-loop 'Thr-210'. Required for the regulation by SNF1 of the transcription of a large set of genes, the modification the activity of metabolic enzymes, and the control of various nutrient-responsive cellular developmental processes. Also phosphorylates GAL83, MIG1 and SIP2. In Saccharomyces cerevisiae (strain YJM789) (Baker's yeast), this protein is Serine/threonine-protein kinase TOS3 (TOS3).